A 478-amino-acid chain; its full sequence is Keratin, type II cytoskeletal 8 (478 aa).

The tract at residues 1–97 (MSIRVTQKSY…DPNIQAVRTQ (97 aa)) is head. Ser-9 bears the Phosphoserine; by PKC/PRKCE mark. Lys-11 is covalently cross-linked (Glycyl lysine isopeptide (Lys-Gly) (interchain with G-Cter in SUMO2)). Residues Ser-13, Ser-15, Ser-21, and Ser-22 each carry the phosphoserine modification. The segment at 16–44 (APRSFSSRSYTSGPGSRISSSAFSRVGSS) is disordered. Arg-23 is modified (omega-N-methylarginine). Ser-24 is modified (phosphoserine; by PKC/PRKCE). Residue Thr-26 is modified to Phosphothreonine. Phosphoserine occurs at positions 27 and 31. Omega-N-methylarginine is present on Arg-32. A phosphoserine mark is found at Ser-34 and Ser-39. An Omega-N-methylarginine modification is found at Arg-40. A phosphoserine mark is found at Ser-43 and Ser-44. Position 48 is an asymmetric dimethylarginine; alternate (Arg-48). Residue Arg-48 is modified to Omega-N-methylarginine; alternate. Ser-81 is subject to Phosphoserine; by MAPK. The coil 1A stretch occupies residues 98-133 (EKEQIKTLNNKFASFIDKVRHLEQQNKVLETKWNLL). The region spanning 98–409 (EKEQIKTLNN…KLLEGEESRL (312 aa)) is the IF rod domain. Residue Lys-108 is modified to N6-malonyllysine. Glycyl lysine isopeptide (Lys-Gly) (interchain with G-Cter in SUMO2) cross-links involve residues Lys-129 and Lys-137. Positions 134 to 150 (QQQKTARSNIDNMFESY) are linker 1. The coil 1B stretch occupies residues 151–242 (INNLRRQLET…QLYEEEIREM (92 aa)). Lys-204 is covalently cross-linked (Glycyl lysine isopeptide (Lys-Gly) (interchain with G-Cter in SUMO1); alternate). Lys-204 is covalently cross-linked (Glycyl lysine isopeptide (Lys-Gly) (interchain with G-Cter in SUMO2); alternate). Lys-214 carries the post-translational modification N6-acetyllysine. Residue Tyr-235 is modified to Phosphotyrosine. A linker 12 region spans residues 243 to 266 (QSQISDTSVVLEMDNNRNLDLDGI). The interval 267–405 (IAEVKAQYEE…ATYRKLLEGE (139 aa)) is coil 2. Positions 268 to 389 (AEVKAQYEEI…EYQELMNVKL (122 aa)) are necessary for interaction with PNN. Lys-271 participates in a covalent cross-link: Glycyl lysine isopeptide (Lys-Gly) (interchain with G-Cter in SUMO2). Ser-281 bears the Phosphoserine mark. Lys-292 is covalently cross-linked (Glycyl lysine isopeptide (Lys-Gly) (interchain with G-Cter in SUMO2)). Lys-302 participates in a covalent cross-link: Glycyl lysine isopeptide (Lys-Gly) (interchain with G-Cter in SUMO2); alternate. Lys-302 is modified (N6-acetyllysine; alternate). Lys-311 participates in a covalent cross-link: Glycyl lysine isopeptide (Lys-Gly) (interchain with G-Cter in SUMO2). Lys-332 is covalently cross-linked (Glycyl lysine isopeptide (Lys-Gly) (interchain with G-Cter in SUMO2); alternate). The residue at position 332 (Lys-332) is an N6-acetyllysine; alternate. Ser-337 is modified (phosphoserine). Residue Lys-400 forms a Glycyl lysine isopeptide (Lys-Gly) (interchain with G-Cter in SUMO2) linkage. The interval 406–478 (ESRLESGMQN…VSESSDVLSK (73 aa)) is tail. A phosphoserine mark is found at Ser-407, Ser-411, Ser-417, Ser-424, and Ser-433. Residue Lys-467 forms a Glycyl lysine isopeptide (Lys-Gly) (interchain with G-Cter in SUMO1); alternate linkage. Lys-467 is covalently cross-linked (Glycyl lysine isopeptide (Lys-Gly) (interchain with G-Cter in SUMO2); alternate). 4 positions are modified to phosphoserine: Ser-470, Ser-472, Ser-473, and Ser-477.

The protein belongs to the intermediate filament family. Heterotetramer of two type I and two type II keratins. Forms a heterodimer with KRT18. Associates with KRT20. Interacts with PNN. When associated with KRT19, interacts with DMD. Interacts with TCHP. Interacts with APEX1. Interacts with GPER1. Interacts with EPPK1. Interacts with PKP1 and PKP2. O-glycosylated. O-GlcNAcylation at multiple sites increases solubility, and decreases stability by inducing proteasomal degradation. In terms of processing, O-glycosylated (O-GlcNAcylated), in a cell cycle-dependent manner. In terms of tissue distribution, expressed in bladder, liver, exocervix and (in very low amounts) esophagus.

It is found in the cytoplasm. The protein resides in the nucleus. Its subcellular location is the nucleoplasm. It localises to the nucleus matrix. Functionally, together with KRT19, helps to link the contractile apparatus to dystrophin at the costameres of striated muscle. The protein is Keratin, type II cytoskeletal 8 (KRT8) of Bos taurus (Bovine).